Reading from the N-terminus, the 389-residue chain is 5-hydroxytryptamine receptor 1B (389 aa).

Positions 1 to 27 (MEAAGAPCAPPPPAGSQTGAPPANLSS) are disordered. The Extracellular portion of the chain corresponds to 1 to 45 (MEAAGAPCAPPPPAGSQTGAPPANLSSAPHNCSAEGYIYQDSVAL). Positions 16–27 (SQTGAPPANLSS) are enriched in polar residues. Residues Asn24 and Asn31 are each glycosylated (N-linked (GlcNAc...) asparagine). A helical transmembrane segment spans residues 46–71 (PWKVLLVILLALITLATTLSNAFVIA). At 72 to 85 (TVYRTRKLHTPANY) the chain is on the cytoplasmic side. Residues 86 to 110 (LIASLAVTDLLVSILVMPISTMYTV) form a helical membrane-spanning segment. Residues 111 to 118 (TGRWTLGQ) are Extracellular-facing. The helical transmembrane segment at 119-144 (VVCDLWLSSDITCCTASILHLCVIAL) threads the bilayer. Cys121 and Cys198 are disulfide-bonded. Ergotamine contacts are provided by Asp128 and Thr133. The DRY motif; important for ligand-induced conformation changes and signaling motif lies at 145–147 (DRY). The Cytoplasmic segment spans residues 145–164 (DRYWAITDAVEYSAKRTPKR). A helical membrane pass occupies residues 165–183 (AAVMIALVWVFSISISLPP). Over 184–204 (FFWRQAKAEEEVSDCVVNTDH) the chain is Extracellular. Val200 contacts ergotamine. The chain crosses the membrane as a helical span at residues 205–228 (ILYTVYSTVGAFYFPTLLLIALYG). Residues 229–314 (RIYVEARSRI…AARERKATKT (86 aa)) lie on the Cytoplasmic side of the membrane. Over residues 258-271 (DSPGSTSSVTSVNS) the composition is skewed to polar residues. Residues 258-281 (DSPGSTSSVTSVNSRAPDVPSESG) are disordered. The helical transmembrane segment at 315–336 (LGIILGAFIVCWLPFFIISLVM) threads the bilayer. Residues 337 to 346 (PICKDACWFH) are Extracellular-facing. A helical transmembrane segment spans residues 347-369 (LAIFDFFTWLGYLNSLINPIIYT). Positions 364–368 (NPIIY) match the NPxxY motif; important for ligand-induced conformation changes and signaling motif. The Cytoplasmic segment spans residues 370 to 389 (MSNEDFKQAFHKLIRFKCAG). The S-palmitoyl cysteine moiety is linked to residue Cys387.

It belongs to the G-protein coupled receptor 1 family. As to quaternary structure, homodimer. Heterodimer with HTR1D. Post-translationally, phosphorylated. Desensitization of the receptor may be mediated by its phosphorylation. Palmitoylated.

The protein resides in the cell membrane. Functionally, G-protein coupled receptor for 5-hydroxytryptamine (serotonin). Also functions as a receptor for ergot alkaloid derivatives, various anxiolytic and antidepressant drugs and other psychoactive substances, such as lysergic acid diethylamide (LSD). Ligand binding causes a conformation change that triggers signaling via guanine nucleotide-binding proteins (G proteins) and modulates the activity of downstream effectors, such as adenylate cyclase. HTR1B is coupled to G(i)/G(o) G alpha proteins and mediates inhibitory neurotransmission by inhibiting adenylate cyclase activity. Arrestin family members inhibit signaling via G proteins and mediate activation of alternative signaling pathways. Regulates the release of 5-hydroxytryptamine, dopamine and acetylcholine in the brain, and thereby affects neural activity, nociceptive processing, pain perception, mood and behavior. Besides, plays a role in vasoconstriction of cerebral arteries. The polypeptide is 5-hydroxytryptamine receptor 1B (HTR1B) (Canis lupus familiaris (Dog)).